The chain runs to 339 residues: Protein LicA (339 aa).

9 tandem repeats follow at residues 4–7 (INQS), 8–11 (INQS), 12–15 (INQS), 16–19 (INQS), 20–23 (INQS), 24–27 (INQS), 28–31 (INQS), 32–35 (INQS), and 36–39 (INQS). Residues 4–39 (INQSINQSINQSINQSINQSINQSINQSINQSINQS) form a 9 X 4 AA tandem repeats of I-N-Q-S region.

The protein belongs to the peptidase S49 family.

Mediates phase variation of the LOS 6A2 and 12D9 epitopes. Phase variation of H.influenza LOS epitopes expressed by LicA is determined by a translational switch. This Haemophilus influenzae protein is Protein LicA (licA).